Consider the following 340-residue polypeptide: MANKNAYAQSGVDVEAGYEVVERIKKHVARTERAGVMGALGGFGGMFDLSKTGVKEPVLISGTDGVGTKLMLAIKYDKHDTIGQDCVAMCVNDIIAAGAEPLYFLDYVATGKNEPAKLEQVVAGVAEGCVQAGAALIGGETAEMPGMYGEDDYDLAGFAVGVAEKSQIIDGSKVVEGDVLLGLASSGIHSNGYSLVRRVFADYTGEEVLPELEGKKLKEVLLEPTRIYVKAVLPLIKEELVNGIAHITGGGFIENVPRMFADDLAAEIDESKVPVLPIFKALEKYGQIKHEEMFEIFNMGVGLMLAVSPENVERVKELLDEAVYEIGRIVKKENESVIIK.

It belongs to the AIR synthase family.

Its subcellular location is the cytoplasm. The enzyme catalyses 2-formamido-N(1)-(5-O-phospho-beta-D-ribosyl)acetamidine + ATP = 5-amino-1-(5-phospho-beta-D-ribosyl)imidazole + ADP + phosphate + H(+). It participates in purine metabolism; IMP biosynthesis via de novo pathway; 5-amino-1-(5-phospho-D-ribosyl)imidazole from N(2)-formyl-N(1)-(5-phospho-D-ribosyl)glycinamide: step 2/2. The polypeptide is Phosphoribosylformylglycinamidine cyclo-ligase (Streptococcus pneumoniae (strain CGSP14)).